Reading from the N-terminus, the 203-residue chain is Regulator of free ubiquitin chains 1 (203 aa).

It belongs to the RFU1 family.

It localises to the endosome. Inhibitor of the DOA4 deubiquitinase involved in the regulation of protein degradation by the proteasome and maintenance of a normal level of free ubiquitin. The polypeptide is Regulator of free ubiquitin chains 1 (RFU1) (Candida glabrata (strain ATCC 2001 / BCRC 20586 / JCM 3761 / NBRC 0622 / NRRL Y-65 / CBS 138) (Yeast)).